The primary structure comprises 153 residues: Profilin (153 aa).

The protein belongs to the profilin family. Occurs in many kinds of cells as a complex with monomeric actin in a 1:1 ratio.

Its subcellular location is the cytoplasm. The protein localises to the cytoskeleton. Its function is as follows. Binds to actin and affects the structure of the cytoskeleton. At high concentrations, profilin prevents the polymerization of actin, whereas it enhances it at low concentrations. By binding to PIP2, it inhibits the formation of IP3 and DG. The sequence is that of Profilin from Tetrahymena pyriformis.